A 288-amino-acid polypeptide reads, in one-letter code: Type II iodothyronine deiodinase (288 aa).

The Lumenal portion of the chain corresponds to 1–5 (MPHVN). The helical; Signal-anchor for type III membrane protein transmembrane segment at 6–26 (LLVVLLILPGVFSNCLFLALY) threads the bilayer. Residues 27-288 (DAVSFLRRAL…SFLESVKASR (262 aa)) are Cytoplasmic-facing. The segment at 99 to 130 (SCAASSSSSHETPTPRTTAEAAATVTTSTTTT) is disordered. Residue U160 is part of the active site. Position 160 (U160) is a non-standard amino acid, selenocysteine.

The protein belongs to the iodothyronine deiodinase family. Predominantly monomer. Can form homodimers but homodimerization is not essential for enzyme activity. As to expression, expressed in intestine, liver, kidney and brain of immediately premetamorphic larvae, of larvae in all stages of metamorphosis and of parasitic feeding juveniles. In immediately premetamorphic larvae, levels are significantly higher in intestine and liver than in kidney and brain.

The protein localises to the endoplasmic reticulum membrane. It carries out the reaction 3,3',5-triiodo-L-thyronine + iodide + A + H(+) = L-thyroxine + AH2. The catalysed reaction is 3,3'-diiodo-L-thyronine + iodide + A + H(+) = 3,3',5'-triiodo-L-thyronine + AH2. It catalyses the reaction 3'-iodo-L-thyronine + iodide + A + H(+) = 3',5'-diiodo-L-thyronine + AH2. The enzyme catalyses 3,3'-diiodothyronamine + iodide + A + H(+) = 3,3',5'-triiodothyronamine + AH2. It carries out the reaction 3'-iodothyronamine + iodide + A + H(+) = 3',5'-diiodothyronamine + AH2. Its function is as follows. Plays a crucial role in the metabolism of thyroid hormones (TH) and has specific roles in TH activation and inactivation by deiodination. Catalyzes the deiodination of L-thyroxine (T4) to 3,5,3'-triiodothyronine (T3), 3,3',5'-triiodothyronine (rT3) to 3,3'-diiodothyronine (3,3'-T2) and 3',5'-diiodothyronine (3',5'-T2) to 3'-monoiodothyronine (3'-T1) via outer-ring deiodination (ORD). Catalyzes the phenolic ring deiodinations of 3,3',5'-triiodothyronamine and 3',5'- diiodothyronamine. The protein is Type II iodothyronine deiodinase of Petromyzon marinus (Sea lamprey).